A 145-amino-acid polypeptide reads, in one-letter code: D-aminoacyl-tRNA deacylase (145 aa).

The Gly-cisPro motif, important for rejection of L-amino acids signature appears at 137 to 138 (GP).

Belongs to the DTD family. As to quaternary structure, homodimer.

The protein resides in the cytoplasm. The enzyme catalyses glycyl-tRNA(Ala) + H2O = tRNA(Ala) + glycine + H(+). It catalyses the reaction a D-aminoacyl-tRNA + H2O = a tRNA + a D-alpha-amino acid + H(+). An aminoacyl-tRNA editing enzyme that deacylates mischarged D-aminoacyl-tRNAs. Also deacylates mischarged glycyl-tRNA(Ala), protecting cells against glycine mischarging by AlaRS. Acts via tRNA-based rather than protein-based catalysis; rejects L-amino acids rather than detecting D-amino acids in the active site. By recycling D-aminoacyl-tRNA to D-amino acids and free tRNA molecules, this enzyme counteracts the toxicity associated with the formation of D-aminoacyl-tRNA entities in vivo and helps enforce protein L-homochirality. This chain is D-aminoacyl-tRNA deacylase, found in Alteromonas mediterranea (strain DSM 17117 / CIP 110805 / LMG 28347 / Deep ecotype).